We begin with the raw amino-acid sequence, 343 residues long: Phosphate acyltransferase (343 aa).

The protein belongs to the PlsX family. As to quaternary structure, homodimer. Probably interacts with PlsY.

Its subcellular location is the cytoplasm. It catalyses the reaction a fatty acyl-[ACP] + phosphate = an acyl phosphate + holo-[ACP]. It functions in the pathway lipid metabolism; phospholipid metabolism. Functionally, catalyzes the reversible formation of acyl-phosphate (acyl-PO(4)) from acyl-[acyl-carrier-protein] (acyl-ACP). This enzyme utilizes acyl-ACP as fatty acyl donor, but not acyl-CoA. The chain is Phosphate acyltransferase from Coxiella burnetii (strain RSA 331 / Henzerling II).